The chain runs to 593 residues: Glutamyl-tRNA(Gln) amidotransferase subunit B, mitochondrial (593 aa).

The transit peptide at 1-49 (MLRPWLRQSTRAARSLPCCQCPRPYSSRLPTLTSPSSSVRRLQTSASES) directs the protein to the mitochondrion. Residues 27 to 42 (SRLPTLTSPSSSVRRL) show a composition bias toward low complexity. Residues 27 to 80 (SRLPTLTSPSSSVRRLQTSASESQDRVPLRKQLKQNAKALKAEKRQRRESEEAS) form a disordered region. Residues 66–80 (LKAEKRQRRESEEAS) are compositionally biased toward basic and acidic residues.

The protein belongs to the GatB/GatE family. GatB subfamily. Subunit of the heterotrimeric GatCAB amidotransferase (AdT) complex, composed of A, B and C subunits.

It is found in the mitochondrion. It carries out the reaction L-glutamyl-tRNA(Gln) + L-glutamine + ATP + H2O = L-glutaminyl-tRNA(Gln) + L-glutamate + ADP + phosphate + H(+). Functionally, allows the formation of correctly charged Gln-tRNA(Gln) through the transamidation of misacylated Glu-tRNA(Gln) in the mitochondria. The reaction takes place in the presence of glutamine and ATP through an activated gamma-phospho-Glu-tRNA(Gln). The polypeptide is Glutamyl-tRNA(Gln) amidotransferase subunit B, mitochondrial (Aspergillus oryzae (strain ATCC 42149 / RIB 40) (Yellow koji mold)).